The primary structure comprises 233 residues: 7-cyano-7-deazaguanine synthase (233 aa).

11 to 21 contacts ATP; sequence LSGGLDSSTVL. Zn(2+) is bound by residues cysteine 195, cysteine 203, cysteine 206, and cysteine 209.

It belongs to the QueC family. It depends on Zn(2+) as a cofactor.

It catalyses the reaction 7-carboxy-7-deazaguanine + NH4(+) + ATP = 7-cyano-7-deazaguanine + ADP + phosphate + H2O + H(+). Its pathway is purine metabolism; 7-cyano-7-deazaguanine biosynthesis. In terms of biological role, catalyzes the ATP-dependent conversion of 7-carboxy-7-deazaguanine (CDG) to 7-cyano-7-deazaguanine (preQ(0)). The polypeptide is 7-cyano-7-deazaguanine synthase (Thermosynechococcus vestitus (strain NIES-2133 / IAM M-273 / BP-1)).